The following is a 447-amino-acid chain: MTISETSSNLKNTPPQWGRKFIQTIADLRLAIILLLLIAIFSISGTVIEQGQSLSFYQANYPEKPALFGFLTWKVLLLLGLNHVYSTWWYLSLLILFGSSLTACTFRRQLPALKAARNWQFYQQSRQFQKLALSAELETGSLESLTPLLEKKGYKVFLENNSLYARKGLIGKIGPIIVHAAMLIILAGAIWGALTGFFAQEMVASGDSFQVKNIIEAGPLSKNSLPKDWGIKVNRFWIDYSPKGDIEQFYSDLSVIDNQGQEIDRKTIQVNQPLHHKGVTFYQTSWGIAGVKVQVNNSPILQLPMASLDTKGNGQIWGTWIPTKTDLSEGVSLLTRDLQGTVIVYDAQGDLTSAVREGMTIPINGVNLKIVELVGSTGLQIKADPGVPIVYLGFALLMMGVVMSYFSHSQIWALQSGDRFYIGGKTNRAQVSFEREIIDTIERLKLK.

3 helical membrane passes run 28-48 (LRLA…GTVI), 87-107 (TWWY…CTFR), and 173-193 (IGPI…IWGA).

The protein belongs to the Ccs1/CcsB family. In terms of assembly, may interact with CcsA.

It is found in the cellular thylakoid membrane. Its function is as follows. Required during biogenesis of c-type cytochromes (cytochrome c6 and cytochrome f) at the step of heme attachment. This is Cytochrome c biogenesis protein CcsB from Microcystis aeruginosa (strain NIES-843 / IAM M-2473).